The chain runs to 257 residues: UPF0246 protein Sama_0917 (257 aa).

The protein belongs to the UPF0246 family.

This chain is UPF0246 protein Sama_0917, found in Shewanella amazonensis (strain ATCC BAA-1098 / SB2B).